Reading from the N-terminus, the 708-residue chain is Polyribonucleotide nucleotidyltransferase (708 aa).

Residues Asp-488 and Asp-494 each contribute to the Mg(2+) site. The KH domain occupies Pro-555–Ile-615. The 68-residue stretch at Gly-625 to Val-692 folds into the S1 motif domain.

Belongs to the polyribonucleotide nucleotidyltransferase family. Mg(2+) is required as a cofactor.

It localises to the cytoplasm. It catalyses the reaction RNA(n+1) + phosphate = RNA(n) + a ribonucleoside 5'-diphosphate. Involved in mRNA degradation. Catalyzes the phosphorolysis of single-stranded polyribonucleotides processively in the 3'- to 5'-direction. This is Polyribonucleotide nucleotidyltransferase from Thermotoga petrophila (strain ATCC BAA-488 / DSM 13995 / JCM 10881 / RKU-1).